Consider the following 146-residue polypeptide: Ribonuclease H (146 aa).

The region spanning 1-143 (MKKRVTIYTD…CDELARQAIK (143 aa)) is the RNase H type-1 domain. Mg(2+) contacts are provided by Asp-10, Glu-48, Asp-70, and Asp-135.

This sequence belongs to the RNase H family. As to quaternary structure, monomer. Mg(2+) is required as a cofactor.

The protein localises to the cytoplasm. It carries out the reaction Endonucleolytic cleavage to 5'-phosphomonoester.. In terms of biological role, endonuclease that specifically degrades the RNA of RNA-DNA hybrids. In Chlorobium limicola (strain DSM 245 / NBRC 103803 / 6330), this protein is Ribonuclease H.